Consider the following 337-residue polypeptide: Anthranilate phosphoribosyltransferase (337 aa).

5-phospho-alpha-D-ribose 1-diphosphate is bound by residues Gly82, 85 to 86 (GD), Thr90, 92 to 95 (NIST), 110 to 118 (KHGNRAMSS), and Thr122. Anthranilate is bound at residue Gly82. Position 94 (Ser94) interacts with Mg(2+). Residue Asn113 participates in anthranilate binding. Arg168 contributes to the anthranilate binding site. Mg(2+)-binding residues include Asp226 and Glu227.

The protein belongs to the anthranilate phosphoribosyltransferase family. In terms of assembly, homodimer. Mg(2+) is required as a cofactor.

The enzyme catalyses N-(5-phospho-beta-D-ribosyl)anthranilate + diphosphate = 5-phospho-alpha-D-ribose 1-diphosphate + anthranilate. It participates in amino-acid biosynthesis; L-tryptophan biosynthesis; L-tryptophan from chorismate: step 2/5. Functionally, catalyzes the transfer of the phosphoribosyl group of 5-phosphorylribose-1-pyrophosphate (PRPP) to anthranilate to yield N-(5'-phosphoribosyl)-anthranilate (PRA). The sequence is that of Anthranilate phosphoribosyltransferase from Phenylobacterium zucineum (strain HLK1).